A 264-amino-acid chain; its full sequence is S-adenosylmethionine decarboxylase proenzyme (264 aa).

Ser-111 functions as the Schiff-base intermediate with substrate; via pyruvic acid in the catalytic mechanism. Ser-111 bears the Pyruvic acid (Ser); by autocatalysis mark. His-116 (proton acceptor; for processing activity) is an active-site residue. The Proton donor; for catalytic activity role is filled by Cys-139.

Belongs to the prokaryotic AdoMetDC family. Type 2 subfamily. In terms of assembly, heterooctamer of four alpha and four beta chains arranged as a tetramer of alpha/beta heterodimers. It depends on pyruvate as a cofactor. Is synthesized initially as an inactive proenzyme. Formation of the active enzyme involves a self-maturation process in which the active site pyruvoyl group is generated from an internal serine residue via an autocatalytic post-translational modification. Two non-identical subunits are generated from the proenzyme in this reaction, and the pyruvate is formed at the N-terminus of the alpha chain, which is derived from the carboxyl end of the proenzyme. The post-translation cleavage follows an unusual pathway, termed non-hydrolytic serinolysis, in which the side chain hydroxyl group of the serine supplies its oxygen atom to form the C-terminus of the beta chain, while the remainder of the serine residue undergoes an oxidative deamination to produce ammonia and the pyruvoyl group blocking the N-terminus of the alpha chain.

The catalysed reaction is S-adenosyl-L-methionine + H(+) = S-adenosyl 3-(methylsulfanyl)propylamine + CO2. It functions in the pathway amine and polyamine biosynthesis; S-adenosylmethioninamine biosynthesis; S-adenosylmethioninamine from S-adenosyl-L-methionine: step 1/1. Catalyzes the decarboxylation of S-adenosylmethionine to S-adenosylmethioninamine (dcAdoMet), the propylamine donor required for the synthesis of the polyamines spermine and spermidine from the diamine putrescine. This is S-adenosylmethionine decarboxylase proenzyme from Geobacillus kaustophilus (strain HTA426).